Consider the following 830-residue polypeptide: Kinesin-like protein KIN-14B (830 aa).

The stretch at 56-97 (ENISDDNTESEAKVQKIQDELVSLNAQLKQITLQRREALNNY) forms a coiled coil. Residues 103–425 (NIRVFCRIRP…LGFATRVRSI (323 aa)) enclose the Kinesin motor domain. 182–189 (GQTGSGKT) is an ATP binding site. Positions 434-476 (EMKARKETLLIDLGQKVNDLEHECEDIRRKIKNLEESMEHLTG) form a coiled coil.

This sequence belongs to the TRAFAC class myosin-kinesin ATPase superfamily. Kinesin family. KIN-14 subfamily.

The protein is Kinesin-like protein KIN-14B of Oryza sativa subsp. japonica (Rice).